We begin with the raw amino-acid sequence, 231 residues long: Orotidine 5'-phosphate decarboxylase (231 aa).

Substrate-binding positions include Asp-11, Lys-33, 60–69 (DLKLHDIPNT), Thr-119, Arg-181, Gln-190, Gly-210, and Arg-211. The active-site Proton donor is Lys-62.

Belongs to the OMP decarboxylase family. Type 1 subfamily. Homodimer.

The enzyme catalyses orotidine 5'-phosphate + H(+) = UMP + CO2. Its pathway is pyrimidine metabolism; UMP biosynthesis via de novo pathway; UMP from orotate: step 2/2. In terms of biological role, catalyzes the decarboxylation of orotidine 5'-monophosphate (OMP) to uridine 5'-monophosphate (UMP). The sequence is that of Orotidine 5'-phosphate decarboxylase from Malacoplasma penetrans (strain HF-2) (Mycoplasma penetrans).